The primary structure comprises 308 residues: GTPase Era (308 aa).

Residues 14 to 181 (RCGFVALIGA…KQALAAMVPP (168 aa)) form the Era-type G domain. The segment at 22-29 (GAPNVGKS) is G1. 22 to 29 (GAPNVGKS) contacts GTP. The segment at 48–52 (QTTRA) is G2. The G3 stretch occupies residues 69–72 (DTPG). Residues 69 to 73 (DTPGI) and 131 to 134 (NKVD) each bind GTP. Residues 131 to 134 (NKVD) are G4. The tract at residues 160 to 162 (ISA) is G5. A KH type-2 domain is found at 212–289 (LHQELPYQST…HLFLFVKVRE (78 aa)).

This sequence belongs to the TRAFAC class TrmE-Era-EngA-EngB-Septin-like GTPase superfamily. Era GTPase family. As to quaternary structure, monomer.

The protein localises to the cytoplasm. Its subcellular location is the cell inner membrane. Functionally, an essential GTPase that binds both GDP and GTP, with rapid nucleotide exchange. Plays a role in 16S rRNA processing and 30S ribosomal subunit biogenesis and possibly also in cell cycle regulation and energy metabolism. In Bradyrhizobium sp. (strain BTAi1 / ATCC BAA-1182), this protein is GTPase Era.